The following is a 453-amino-acid chain: Ribulose bisphosphate carboxylase large chain (453 aa).

The propeptide occupies 1-2 (MS). The residue at position 3 (proline 3) is an N-acetylproline. At lysine 14 the chain carries N6,N6,N6-trimethyllysine. Substrate is bound by residues asparagine 123 and threonine 173. The Proton acceptor role is filled by lysine 175. Lysine 177 lines the substrate pocket. Mg(2+) contacts are provided by lysine 201, aspartate 203, and glutamate 204. Lysine 201 is subject to N6-carboxylysine. The active-site Proton acceptor is histidine 294. Arginine 295, histidine 327, and serine 379 together coordinate substrate.

It belongs to the RuBisCO large chain family. Type I subfamily. As to quaternary structure, heterohexadecamer of 8 large chains and 8 small chains; disulfide-linked. The disulfide link is formed within the large subunit homodimers. The cofactor is Mg(2+). The disulfide bond which can form in the large chain dimeric partners within the hexadecamer appears to be associated with oxidative stress and protein turnover.

It is found in the plastid. It localises to the chloroplast. It catalyses the reaction 2 (2R)-3-phosphoglycerate + 2 H(+) = D-ribulose 1,5-bisphosphate + CO2 + H2O. It carries out the reaction D-ribulose 1,5-bisphosphate + O2 = 2-phosphoglycolate + (2R)-3-phosphoglycerate + 2 H(+). In terms of biological role, ruBisCO catalyzes two reactions: the carboxylation of D-ribulose 1,5-bisphosphate, the primary event in carbon dioxide fixation, as well as the oxidative fragmentation of the pentose substrate in the photorespiration process. Both reactions occur simultaneously and in competition at the same active site. This is Ribulose bisphosphate carboxylase large chain from Phuopsis stylosa (Caucasian crosswort).